We begin with the raw amino-acid sequence, 437 residues long: Adenylosuccinate synthetase (437 aa).

GTP is bound by residues 12-18 (GDEGKGK) and 40-42 (GHT). Asp-13 serves as the catalytic Proton acceptor. Residues Asp-13 and Gly-40 each coordinate Mg(2+). IMP is bound by residues 13 to 16 (DEGK), 38 to 41 (NAGH), Thr-128, Arg-142, Gln-223, Thr-238, and Arg-302. His-41 serves as the catalytic Proton donor. 298–304 (TTTGRRR) contacts substrate. GTP contacts are provided by residues Arg-304, 330 to 332 (KLD), and 412 to 414 (SLG).

Belongs to the adenylosuccinate synthetase family. As to quaternary structure, homodimer. Requires Mg(2+) as cofactor.

The protein resides in the cytoplasm. The enzyme catalyses IMP + L-aspartate + GTP = N(6)-(1,2-dicarboxyethyl)-AMP + GDP + phosphate + 2 H(+). The protein operates within purine metabolism; AMP biosynthesis via de novo pathway; AMP from IMP: step 1/2. In terms of biological role, plays an important role in the de novo pathway of purine nucleotide biosynthesis. Catalyzes the first committed step in the biosynthesis of AMP from IMP. The chain is Adenylosuccinate synthetase from Prochlorococcus marinus (strain MIT 9211).